The sequence spans 295 residues: 4-hydroxy-tetrahydrodipicolinate synthase (295 aa).

Threonine 46 contacts pyruvate. The Proton donor/acceptor role is filled by tyrosine 134. Catalysis depends on lysine 162, which acts as the Schiff-base intermediate with substrate. Isoleucine 205 lines the pyruvate pocket.

Belongs to the DapA family. As to quaternary structure, homotetramer; dimer of dimers.

The protein localises to the cytoplasm. It catalyses the reaction L-aspartate 4-semialdehyde + pyruvate = (2S,4S)-4-hydroxy-2,3,4,5-tetrahydrodipicolinate + H2O + H(+). Its pathway is amino-acid biosynthesis; L-lysine biosynthesis via DAP pathway; (S)-tetrahydrodipicolinate from L-aspartate: step 3/4. In terms of biological role, catalyzes the condensation of (S)-aspartate-beta-semialdehyde [(S)-ASA] and pyruvate to 4-hydroxy-tetrahydrodipicolinate (HTPA). The chain is 4-hydroxy-tetrahydrodipicolinate synthase from Anaeromyxobacter dehalogenans (strain 2CP-C).